A 108-amino-acid chain; its full sequence is Nucleoid-associated protein Csal_1459 (108 aa).

The segment covering glutamate 84–glutamate 93 has biased composition (basic and acidic residues). The segment at glutamate 84–phenylalanine 108 is disordered.

The protein belongs to the YbaB/EbfC family. As to quaternary structure, homodimer.

It localises to the cytoplasm. The protein resides in the nucleoid. Functionally, binds to DNA and alters its conformation. May be involved in regulation of gene expression, nucleoid organization and DNA protection. The polypeptide is Nucleoid-associated protein Csal_1459 (Chromohalobacter salexigens (strain ATCC BAA-138 / DSM 3043 / CIP 106854 / NCIMB 13768 / 1H11)).